Consider the following 303-residue polypeptide: Caspase-7 (303 aa).

Residue M1 is modified to N-acetylmethionine. The propeptide occupies 1–23; it reads MTDDQDCAAELEKVDSSSEDGVD. Residues 1–26 are disordered; sequence MTDDQDCAAELEKVDSSSEDGVDAKP. Residues 10–26 are compositionally biased toward basic and acidic residues; the sequence is ELEKVDSSSEDGVDAKP. At S30 the chain carries Phosphoserine. An exosite region spans residues 38 to 41; sequence KKKR. Residues 76 to 87 are loop L1; sequence KNFDKATGMDVR. The active site involves H144. At T173 the chain carries Phosphothreonine. The active site involves C186. Residues 187–196 form a loop L2 region; that stretch reads RGTELDDGIQ. Residues 199 to 206 constitute a propeptide that is removed on maturation; that stretch reads SGPINDID. The loop L3 stretch occupies residues 226–238; the sequence is VPGYYSWRNPGKG. S239 is subject to Phosphoserine. The tract at residues 274 to 288 is loop L4; it reads ESQSDDPRFNEKKQI.

This sequence belongs to the peptidase C14A family. As to quaternary structure, heterotetramer that consists of two anti-parallel arranged heterodimers, each one formed by a 20 kDa (p20) and a 11 kDa (p11) subunit. Interacts with XIAP (via its second BIR domain); inhibiting CASP7 activity. Interacts with BIRC6/bruce. Interacts with ATXN3 (short isoform 1). Interacts with HSPA5. In terms of processing, cleavage by different proteases, such as granzyme B (GZMB), caspase-1 (CASP1), caspase-8 (CASP8) or caspase-9 (CASP9) generate the two active subunits. Its involvement in different programmed cell death processes is probably specified by the protease that activates CASP7. Cleaved and activated by initiator caspases (CASP8 and/or CASP9), leading to execution phase of apoptosis. Cleavage and maturation by GZMB regulates granzyme-mediated programmed cell death. Cleaved and activated by CASP1 in response to bacterial infection. Propeptide domains can also be cleaved efficiently by CASP3. Active heterodimers between the small subunit of caspase-7 and the large subunit of CASP3, and vice versa, also occur. Also cleaved at the N-terminus at alternative sites by CAPN1, leading to its activation. Post-translationally, phosphorylation at Ser-30 and Ser-239 by PAK2 inhibits its activity. Phosphorylation at Ser-30 prevents cleavage and activation by initiator caspase CASP9, while phosphorylation at Ser-239 prevents thiol protease activity by preventing substrate-binding. Ubiquitinated by BIRC6; this activity is inhibited by DIABLO/SMAC. As to expression, highly expressed in heart, lung, liver and kidney. Low levels in spleen, skeletal muscle and testis. No expression in the brain.

The protein localises to the cytoplasm. It is found in the cytosol. The protein resides in the nucleus. It localises to the secreted. Its subcellular location is the extracellular space. It catalyses the reaction Strict requirement for an Asp residue at position P1 and has a preferred cleavage sequence of Asp-Glu-Val-Asp-|-.. Its activity is regulated as follows. During activation, the N-terminal disordered prodomain is removed by cleavage. Concomitantly, double cleavage gives rise to a large Caspase-7 subunit p20 and a small Caspase-7 subunit p11. The two large and two small subunits then assemble to form the active CASP7 complex. Can be cleaved and activated by different caspases, depending on the context. Cleaved and activated by initiator caspases (CASP8 and/or CASP9), leading to execution phase of apoptosis. Cleavage and maturation by GZMB regulates granzyme-mediated programmed cell death. Cleavage and maturation by CASP1 regulates pyroptosis. Inhibited by XIAP, which directly binds to the active site pocket and obstructs substrate entry. Phosphorylation at Ser-30 and Ser-239 by PAK2 inhibits its activity. Inhibited by BIRC6; following inhibition of BIRC6-caspase binding by DIABLO/SMAC, BIRC6 is subjected to caspase cleavage, leading to an increase in active caspases. In terms of biological role, thiol protease involved in different programmed cell death processes, such as apoptosis, pyroptosis or granzyme-mediated programmed cell death, by proteolytically cleaving target proteins. Has a marked preference for Asp-Glu-Val-Asp (DEVD) consensus sequences, with some plasticity for alternate non-canonical sequences. Its involvement in the different programmed cell death processes is probably determined by upstream proteases that activate CASP7. Acts as an effector caspase involved in the execution phase of apoptosis: following cleavage and activation by initiator caspases (CASP8 and/or CASP9), mediates execution of apoptosis by catalyzing cleavage of proteins, such as CLSPN, PARP1, PTGES3 and YY1. Compared to CASP3, acts as a minor executioner caspase and cleaves a limited set of target proteins. Acts as a key regulator of the inflammatory response in response to bacterial infection by catalyzing cleavage and activation of the sphingomyelin phosphodiesterase SMPD1 in the extracellular milieu, thereby promoting membrane repair. Regulates pyroptosis in intestinal epithelial cells: cleaved and activated by CASP1 in response to S.typhimurium infection, promoting its secretion to the extracellular milieu, where it catalyzes activation of SMPD1, generating ceramides that repair membranes and counteract the action of gasdermin-D (GSDMD) pores. Regulates granzyme-mediated programmed cell death in hepatocytes: cleaved and activated by granzyme B (GZMB) in response to bacterial infection, promoting its secretion to the extracellular milieu, where it catalyzes activation of SMPD1, generating ceramides that repair membranes and counteract the action of perforin (PRF1) pores. Following cleavage by CASP1 in response to inflammasome activation, catalyzes processing and inactivation of PARP1, alleviating the transcription repressor activity of PARP1. Acts as an inhibitor of type I interferon production during virus-induced apoptosis by mediating cleavage of antiviral proteins CGAS, IRF3 and MAVS, thereby preventing cytokine overproduction. Cleaves and activates sterol regulatory element binding proteins (SREBPs). Cleaves phospholipid scramblase proteins XKR4, XKR8 and XKR9. Cleaves BIRC6 following inhibition of BIRC6-caspase binding by DIABLO/SMAC. The protein is Caspase-7 of Mus musculus (Mouse).